A 55-amino-acid polypeptide reads, in one-letter code: MAKKSGSGLQSSAGLMRYYEADKNAVQVQPKVVLIVGAIVGIAVLFLSAVNGFWP.

Topologically, residues 1–29 are cytoplasmic; it reads MAKKSGSGLQSSAGLMRYYEADKNAVQVQ. A helical membrane pass occupies residues 30 to 51; sequence PKVVLIVGAIVGIAVLFLSAVN. Topologically, residues 52-55 are extracellular; that stretch reads GFWP.

Belongs to the SEC61-beta family. In terms of assembly, component of the protein translocase complex. Heterotrimer consisting of alpha (SecY), beta (SecG) and gamma (SecE) subunits. Can form oligomers of the heterotrimer.

Its subcellular location is the cell membrane. Its function is as follows. Involved in protein export. The function of the beta subunit is unknown, but it may be involved in stabilization of the trimeric complex. The sequence is that of Preprotein translocase subunit SecG from Methanosarcina barkeri (strain Fusaro / DSM 804).